Reading from the N-terminus, the 271-residue chain is uncharacterized protein (271 aa).

This is an uncharacterized protein from Escherichia coli (strain K12).